The primary structure comprises 837 residues: Cap-specific mRNA (nucleoside-2'-O-)-methyltransferase 1 (837 aa).

A disordered region spans residues 1–66 (MKRRTDPECT…EGKQPCSDDF (66 aa)). Residues 2-18 (KRRTDPECTAPLKKQKR) carry the Bipartite nuclear localization signal motif. A phosphoserine mark is found at Ser27, Ser30, and Ser52. A compositionally biased stretch (basic and acidic residues) spans 56–66 (TEGKQPCSDDF). The G-patch domain occupies 86–132 (YNSVSQRLMAKMGFREGEGLGKYSQGRKDIVETSNQKGRRGLGLTLQ). Position 90 is a phosphoserine (Ser90). An N6-acetyllysine modification is found at Lys107. Substrate is bound by residues 202-206 (KSVFD) and Arg217. Residues 230–449 (FFLNRAAMKM…ERYVVCKGLK (220 aa)) form the RrmJ-type SAM-dependent 2'-O-MTase domain. Position 233 (Asn233) interacts with S-adenosyl-L-methionine. The active site involves Lys238. S-adenosyl-L-methionine is bound by residues 276 to 282 (CAGPGGF) and 334 to 335 (DI). Residue Asp363 is part of the active site. 373 to 375 (NLQ) contacts substrate. Lys403 functions as the Proton acceptor in the catalytic mechanism. Asn438 lines the substrate pocket. An interaction with POLR2A region spans residues 726–834 (SGGTPKLSYT…VLSFIQSHNP (109 aa)). The WW domain occupies 751-785 (RTVNEPWTMGFSKSNNRKFFYNKKTQKSVYALPTE).

In terms of assembly, interacts with POLR2A (via C-terminus).

It is found in the nucleus. The catalysed reaction is a 5'-end (N(7)-methyl 5'-triphosphoguanosine)-ribonucleoside in mRNA + S-adenosyl-L-methionine = a 5'-end (N(7)-methyl 5'-triphosphoguanosine)-(2'-O-methyl-ribonucleoside) in mRNA + S-adenosyl-L-homocysteine + H(+). Its function is as follows. S-adenosyl-L-methionine-dependent methyltransferase that mediates mRNA cap1 2'-O-ribose methylation to the 5'-cap structure of mRNAs. Methylates the ribose of the first nucleotide of a m(7)GpppG-capped mRNA and small nuclear RNA (snRNA) to produce m(7)GpppRm (cap1). Displays a preference for cap0 transcripts. Cap1 modification is linked to higher levels of translation. May be involved in the interferon response pathway. The sequence is that of Cap-specific mRNA (nucleoside-2'-O-)-methyltransferase 1 (Cmtr1) from Mus musculus (Mouse).